The primary structure comprises 443 residues: Serine/threonine-protein phosphatase 2A 55 kDa regulatory subunit B beta isoform (443 aa).

7 WD repeats span residues 22-61 (TEAD…KNQP), 87-128 (EIEE…KRPE), 171-209 (AHTY…RSFN), 220-260 (ELTE…LCDR), 279-317 (EIIS…RPIE), 334-375 (ENDC…DVTL), and 410-443 (DFSK…DKVN).

It belongs to the phosphatase 2A regulatory subunit B family. In terms of assembly, PP2A consists of a common heterodimeric core enzyme, composed of a 36 kDa catalytic subunit (subunit C) and a 65 kDa constant regulatory subunit (PR65 or subunit A), that associates with a variety of regulatory subunits.

Its subcellular location is the cytoplasm. The protein localises to the cytoskeleton. The protein resides in the membrane. Functionally, the B regulatory subunit might modulate substrate selectivity and catalytic activity, and might also direct the localization of the catalytic enzyme to a particular subcellular compartment. Negatively controls the initiation of oocyte maturation. The protein is Serine/threonine-protein phosphatase 2A 55 kDa regulatory subunit B beta isoform (ppp2r2b) of Xenopus tropicalis (Western clawed frog).